A 376-amino-acid polypeptide reads, in one-letter code: 23S rRNA (uracil(747)-C(5))-methyltransferase RlmC (376 aa).

[4Fe-4S] cluster contacts are provided by cysteine 3, cysteine 11, cysteine 14, and cysteine 87. S-adenosyl-L-methionine-binding residues include glutamine 212, phenylalanine 241, glutamate 262, and asparagine 307. The active-site Nucleophile is the cysteine 334.

This sequence belongs to the class I-like SAM-binding methyltransferase superfamily. RNA M5U methyltransferase family. RlmC subfamily.

It catalyses the reaction uridine(747) in 23S rRNA + S-adenosyl-L-methionine = 5-methyluridine(747) in 23S rRNA + S-adenosyl-L-homocysteine + H(+). Its function is as follows. Catalyzes the formation of 5-methyl-uridine at position 747 (m5U747) in 23S rRNA. This is 23S rRNA (uracil(747)-C(5))-methyltransferase RlmC from Salmonella newport (strain SL254).